Consider the following 351-residue polypeptide: Translation initiation factor eIF2B subunit beta (351 aa).

The protein belongs to the eIF-2B alpha/beta/delta subunits family. In terms of assembly, component of the translation initiation factor 2B (eIF2B) complex which is a heterodecamer of two sets of five different subunits: alpha, beta, gamma, delta and epsilon. Subunits alpha, beta and delta comprise a regulatory subcomplex and subunits epsilon and gamma comprise a catalytic subcomplex. Within the complex, the hexameric regulatory complex resides at the center, with the two heterodimeric catalytic subcomplexes bound on opposite sides.

It is found in the cytoplasm. Its subcellular location is the cytosol. Activated by the chemical integrated stress response (ISR) inhibitor ISRIB which stimulates guanine nucleotide exchange factor activity for both phosphorylated and unphosphorylated eIF2. Acts as a component of the translation initiation factor 2B (eIF2B) complex, which catalyzes the exchange of GDP for GTP on eukaryotic initiation factor 2 (eIF2) gamma subunit. Its guanine nucleotide exchange factor activity is repressed when bound to eIF2 complex phosphorylated on the alpha subunit, thereby limiting the amount of methionyl-initiator methionine tRNA available to the ribosome and consequently global translation is repressed. The sequence is that of Translation initiation factor eIF2B subunit beta (Eif2b2) from Rattus norvegicus (Rat).